The primary structure comprises 330 residues: 5'-AMP-activated protein kinase subunit gamma-1 (330 aa).

Residues 1–24 form a disordered region; the sequence is MEAVPSSDSYPAVENEHLQETPES. 3 CBS domains span residues 43–103, 125–187, and 198–260; these read PTSS…KSAL, SFKP…PKPE, and IGTY…NLDV. ADP is bound by residues R70, 85–90, V130, 151–152, and K170; these read MLTITD and HR. AMP contacts are provided by residues R70, 85–90, V130, H151, 151–152, K170, T200, A205, 226–227, and 242–245; these read MLTITD, HR, SA, and SKFD. Residues R70, 85–90, V130, 151–152, R152, and K170 each bind ATP; these read MLTITD and HR. The short motif at 138–159 is the AMPK pseudosubstrate element; that stretch reads LFDAVSSLIRNKIHRLPVIDPE. Residue 242–245 coordinates ADP; it reads SKFD. 242 to 245 contacts ATP; the sequence is SKFD. At S261 the chain carries Phosphoserine; by ULK1. T263 carries the post-translational modification Phosphothreonine; by ULK1. R269 is a binding site for ADP. R269 serves as a coordination point for AMP. R269 contacts ATP. A Phosphoserine; by ULK1 modification is found at S270. The CBS 4 domain maps to 272–329; it reads YFEGVLKCYLHETLETIINRLVEAEVHRLVVVDENDVVKGIVSLSDILQALVLTGGEK. Residues L277 and 298-299 each bind ADP; that span reads HR. AMP is bound by residues L277, H298, 298 to 299, and 314 to 317; these read HR and SLSD. ATP is bound by residues L277 and 298 to 299; that span reads HR.

This sequence belongs to the 5'-AMP-activated protein kinase gamma subunit family. In terms of assembly, AMPK is a heterotrimer of an alpha catalytic subunit (PRKAA1 or PRKAA2), a beta (PRKAB1 or PRKAB2) and a gamma non-catalytic subunits (PRKAG1, PRKAG2 or PRKAG3). Interacts with FNIP1 and FNIP2. Post-translationally, phosphorylated by ULK1 and ULK2; leading to negatively regulate AMPK activity and suggesting the existence of a regulatory feedback loop between ULK1, ULK2 and AMPK. In terms of processing, glycosylated; O-GlcNAcylated by OGT, promoting the AMP-activated protein kinase (AMPK) activity.

AMP/ATP-binding subunit of AMP-activated protein kinase (AMPK), an energy sensor protein kinase that plays a key role in regulating cellular energy metabolism. In response to reduction of intracellular ATP levels, AMPK activates energy-producing pathways and inhibits energy-consuming processes: inhibits protein, carbohydrate and lipid biosynthesis, as well as cell growth and proliferation. AMPK acts via direct phosphorylation of metabolic enzymes, and by longer-term effects via phosphorylation of transcription regulators. Also acts as a regulator of cellular polarity by remodeling the actin cytoskeleton; probably by indirectly activating myosin. Gamma non-catalytic subunit mediates binding to AMP, ADP and ATP, leading to activate or inhibit AMPK: AMP-binding results in allosteric activation of alpha catalytic subunit (PRKAA1 or PRKAA2) both by inducing phosphorylation and preventing dephosphorylation of catalytic subunits. ADP also stimulates phosphorylation, without stimulating already phosphorylated catalytic subunit. ATP promotes dephosphorylation of catalytic subunit, rendering the AMPK enzyme inactive. In Bos taurus (Bovine), this protein is 5'-AMP-activated protein kinase subunit gamma-1 (PRKAG1).